Here is a 967-residue protein sequence, read N- to C-terminus: Serine/threonine-protein kinase 10 (967 aa).

2 positions are modified to phosphoserine: S13 and S20. The Protein kinase domain maps to 36-294 (WEILGELGDG…AAQLLQHPFV (259 aa)). Residues 42-50 (LGDGAFGKV) and K65 each bind ATP. D157 (proton acceptor) is an active-site residue. The interval 175-224 (DFGVSAKNLKTLQKRDSFIGTPYWMAPEVVLCETMKDAPYDYKADIWSLG) is activation segment. T185 carries the post-translational modification Phosphothreonine; by autocatalysis. S191 bears the Phosphoserine; by autocatalysis mark. 2 disordered regions span residues 317–454 (EIED…RPNS) and 468–498 (GGLE…SMDY). Polar residues-rich tracts occupy residues 339 to 364 (NHTQ…DSST), 378 to 393 (PCNQ…NTSP), and 431 to 454 (TDQA…RPNS). S438, S450, S454, and S485 each carry phosphoserine. Residues 486-498 (DCSNLSTSESMDY) are compositionally biased toward polar residues. Phosphoserine occurs at positions 514 and 549. Disordered stretches follow at residues 827-866 (INGA…ENQM) and 902-967 (LDES…GDAS). Composition is skewed to basic and acidic residues over residues 835–866 (EQRE…ENQM) and 902–947 (LDES…EAET). At T951 the chain carries Phosphothreonine.

Belongs to the protein kinase superfamily. STE Ser/Thr protein kinase family. STE20 subfamily. Homodimer; homodimerization is required for activation segment autophosphorylation. Post-translationally, autophosphorylates following homodimerization, leading to activation of the protein.

It localises to the cell membrane. The catalysed reaction is L-seryl-[protein] + ATP = O-phospho-L-seryl-[protein] + ADP + H(+). It catalyses the reaction L-threonyl-[protein] + ATP = O-phospho-L-threonyl-[protein] + ADP + H(+). Inhibited by the pyrrole-indolinone inhibitor SU11274 (K00593): intercalates between the ATP-binding Lys-65 and alpha-C glutamate (Glu-81), resulting in a partial disordering of the lysine side chain. Also specifically inhibited by erlotinib. Slightly inhibited by gefitinib. In terms of biological role, serine/threonine-protein kinase involved in regulation of lymphocyte migration. Phosphorylates MSN, and possibly PLK1. Involved in regulation of lymphocyte migration by mediating phosphorylation of ERM proteins such as MSN. Acts as a negative regulator of MAP3K1/MEKK1. May also act as a cell cycle regulator by acting as a polo kinase kinase: mediates phosphorylation of PLK1 in vitro; however such data require additional evidences in vivo. This Rattus norvegicus (Rat) protein is Serine/threonine-protein kinase 10 (Stk10).